The following is a 213-amino-acid chain: Receptor-binding cancer antigen expressed on SiSo cells (213 aa).

The Extracellular portion of the chain corresponds to 1 to 6; it reads MAITQF. The helical; Signal-anchor for type III membrane protein transmembrane segment at 7–27 threads the bilayer; sequence RLFKFCTCLATVFSFLKRLIC. The Cytoplasmic portion of the chain corresponds to 28–213; it reads RSGRGRKLSG…EQNKIGVKLS (186 aa). Residue Ser36 is modified to Phosphoserine. A Phosphothreonine modification is found at Thr41. At Tyr94 the chain carries Phosphotyrosine. The stretch at 163 to 211 forms a coiled coil; the sequence is EDAAWQAEEVLRQQKLADREKRAAEQQRKKMEKEAQRLMKKEQNKIGVK. The segment covering 178 to 206 has biased composition (basic and acidic residues); it reads LADREKRAAEQQRKKMEKEAQRLMKKEQN. A disordered region spans residues 178–213; that stretch reads LADREKRAAEQQRKKMEKEAQRLMKKEQNKIGVKLS.

Homodimer. Widely expressed. Expressed in ovary, testis, prostate, thymus, muscle and heart, but not in small intestine, colon, lymph nodes, or peripherical blood lymphocytes. The protein is not detected in any of the above organs.

Its subcellular location is the golgi apparatus membrane. In terms of biological role, may participate in suppression of cell proliferation and induces apoptotic cell death through activation of interleukin-1-beta converting enzyme (ICE)-like proteases. The polypeptide is Receptor-binding cancer antigen expressed on SiSo cells (EBAG9) (Homo sapiens (Human)).